The chain runs to 356 residues: DNA polymerase IV (356 aa).

Residues 7–188 (IIHIDMDCFY…LPLKKIPRVG (182 aa)) form the UmuC domain. Residues D11 and D106 each coordinate Mg(2+). E107 is an active-site residue.

The protein belongs to the DNA polymerase type-Y family. In terms of assembly, monomer. Mg(2+) is required as a cofactor.

It is found in the cytoplasm. The enzyme catalyses DNA(n) + a 2'-deoxyribonucleoside 5'-triphosphate = DNA(n+1) + diphosphate. Its function is as follows. Poorly processive, error-prone DNA polymerase involved in untargeted mutagenesis. Copies undamaged DNA at stalled replication forks, which arise in vivo from mismatched or misaligned primer ends. These misaligned primers can be extended by PolIV. Exhibits no 3'-5' exonuclease (proofreading) activity. May be involved in translesional synthesis, in conjunction with the beta clamp from PolIII. This is DNA polymerase IV from Actinobacillus pleuropneumoniae serotype 5b (strain L20).